The primary structure comprises 801 residues: Disks large homolog 4 (801 aa).

The 57-residue stretch at 4 to 60 (KREDTERALQAMEACQSAGDEGFRTRAERLLTIFQSDLFQALLDIQEFYELTVFENQ) folds into the L27 domain. PDZ domains are found at residues 153-240 (EITL…LRHK) and 248-335 (ELKL…AKTL). Positions 339–373 (HHQDAYNPPDITSSYSPHMDMSDYPQALSPSSPRR) are disordered. A PDZ 3 domain is found at 393-474 (RVVIHRGSTG…TVTIITQYRP (82 aa)). Residues 507 to 577 (KRSFFIRALF…PSKRRVERKE (71 aa)) form the SH3 domain. The 177-residue stretch at 610–786 (ARPVIILGPS…IYHHVKSVIE (177 aa)) folds into the Guanylate kinase-like domain.

It belongs to the MAGUK family. Post-translationally, ubiquitinated by MDM2 in response to NMDA receptor activation, leading to proteasome-mediated degradation of DLG4 which is required for AMPA receptor endocytosis. In terms of processing, palmitoylated. Palmitoylation is required for targeting to postsynaptic density, plasma membrane and synapses.

Its subcellular location is the cell membrane. It is found in the postsynaptic density. It localises to the synapse. Postsynaptic scaffolding protein that plays a critical role in synaptogenesis and synaptic plasticity by providing a platform for the postsynaptic clustering of crucial synaptic proteins. In Danio rerio (Zebrafish), this protein is Disks large homolog 4 (dlg4).